Here is a 318-residue protein sequence, read N- to C-terminus: Small ribosomal subunit biogenesis GTPase RsgA (318 aa).

Positions 1 to 16 (MTRGKPGRAGHDRRHA) are enriched in basic residues. Residues 1-21 (MTRGKPGRAGHDRRHASTGEH) form a disordered region. In terms of domain architecture, CP-type G spans 84–249 (SDQFKSKQLA…LIDSPGFQEF (166 aa)). Residues 133–136 (NKID) and 187–195 (GQSGMGKSS) each bind GTP. Zn(2+) contacts are provided by C273, C278, H280, and C286.

Belongs to the TRAFAC class YlqF/YawG GTPase family. RsgA subfamily. As to quaternary structure, monomer. Associates with 30S ribosomal subunit, binds 16S rRNA. It depends on Zn(2+) as a cofactor.

It localises to the cytoplasm. One of several proteins that assist in the late maturation steps of the functional core of the 30S ribosomal subunit. Helps release RbfA from mature subunits. May play a role in the assembly of ribosomal proteins into the subunit. Circularly permuted GTPase that catalyzes slow GTP hydrolysis, GTPase activity is stimulated by the 30S ribosomal subunit. This is Small ribosomal subunit biogenesis GTPase RsgA from Ralstonia nicotianae (strain ATCC BAA-1114 / GMI1000) (Ralstonia solanacearum).